The sequence spans 326 residues: Phosphate acyltransferase (326 aa).

Belongs to the PlsX family. Homodimer. Probably interacts with PlsY.

Its subcellular location is the cytoplasm. It carries out the reaction a fatty acyl-[ACP] + phosphate = an acyl phosphate + holo-[ACP]. It functions in the pathway lipid metabolism; phospholipid metabolism. Its function is as follows. Catalyzes the reversible formation of acyl-phosphate (acyl-PO(4)) from acyl-[acyl-carrier-protein] (acyl-ACP). This enzyme utilizes acyl-ACP as fatty acyl donor, but not acyl-CoA. This Petrotoga mobilis (strain DSM 10674 / SJ95) protein is Phosphate acyltransferase.